The chain runs to 1229 residues: Alpha,alpha-trehalose-phosphate synthase [UDP-forming] 2 (1229 aa).

The disordered stretch occupies residues 196-233; that stretch reads VSSDSEGEEAIHNVRSGTHTESESEEDPKAPRSGLATS. The segment covering 213-225 has biased composition (basic and acidic residues); the sequence is THTESESEEDPKA.

In the N-terminal section; belongs to the glycosyltransferase 20 family. The protein in the C-terminal section; belongs to the gob-1 trehalose phosphatase family.

It catalyses the reaction D-glucose 6-phosphate + UDP-alpha-D-glucose = alpha,alpha-trehalose 6-phosphate + UDP + H(+). In terms of biological role, catalyzes the production of trehalose from glucose-6-phosphate and UDP-alpha-D-glucose in a 2 step process. This Caenorhabditis elegans protein is Alpha,alpha-trehalose-phosphate synthase [UDP-forming] 2 (tps-2).